The sequence spans 341 residues: UDP-3-O-(3-hydroxymyristoyl)glucosamine N-acyltransferase (341 aa).

Histidine 239 (proton acceptor) is an active-site residue.

This sequence belongs to the transferase hexapeptide repeat family. LpxD subfamily. Homotrimer.

It catalyses the reaction a UDP-3-O-[(3R)-3-hydroxyacyl]-alpha-D-glucosamine + a (3R)-hydroxyacyl-[ACP] = a UDP-2-N,3-O-bis[(3R)-3-hydroxyacyl]-alpha-D-glucosamine + holo-[ACP] + H(+). The enzyme catalyses UDP-3-O-[(3R)-3-hydroxytetradecanoyl]-alpha-D-glucosamine + (3R)-hydroxytetradecanoyl-[ACP] = UDP-2-N,3-O-bis[(3R)-3-hydroxytetradecanoyl]-alpha-D-glucosamine + holo-[ACP] + H(+). It participates in glycolipid biosynthesis; lipid IV(A) biosynthesis; lipid IV(A) from (3R)-3-hydroxytetradecanoyl-[acyl-carrier-protein] and UDP-N-acetyl-alpha-D-glucosamine: step 3/6. Functionally, catalyzes the N-acylation of UDP-3-O-(hydroxytetradecanoyl)glucosamine using 3-hydroxytetradecanoyl-ACP as the acyl donor. Is involved in the biosynthesis of lipid A, a phosphorylated glycolipid that anchors the lipopolysaccharide to the outer membrane of the cell. The chain is UDP-3-O-(3-hydroxymyristoyl)glucosamine N-acyltransferase from Shigella dysenteriae serotype 1 (strain Sd197).